The sequence spans 338 residues: MFCIGGVNMKRSFFLYSNGTLKRKDNTITFINEKDEKRDIPIEMVDDFYVMSEMNFNTKFINYISQFGIPIHFFNYYTFYTGSFYPREMNISGQLLVKQVEHYTNEQKRVEIAREFIEGASFNIYRNLRYYNGRGKDLKLYMDQIEELRKHLKEVNNVEELMGYEGNIRKIYYEAWNIIVNQEIDFEKRVKNPPDNMINSLISFVNTLFYTKVLGEIYKTQLNPTVSYLHQPSTRRFSLSLDISEVFKPLIVDRLIFSLLNKNQITEKSFVKDFEYLRLKEDVSKLIVQEFEDRLKQIITHKDLNRKISYQYLVRLECYKLIKHLLGEKKYKSFQMWW.

Mn(2+)-binding residues include Glu-165, His-230, and Glu-245.

The protein belongs to the CRISPR-associated endonuclease Cas1 family. In terms of assembly, homodimer, forms a heterotetramer with a Cas2 homodimer. It depends on Mg(2+) as a cofactor. Mn(2+) serves as cofactor.

Functionally, CRISPR (clustered regularly interspaced short palindromic repeat), is an adaptive immune system that provides protection against mobile genetic elements (viruses, transposable elements and conjugative plasmids). CRISPR clusters contain spacers, sequences complementary to antecedent mobile elements, and target invading nucleic acids. CRISPR clusters are transcribed and processed into CRISPR RNA (crRNA). Acts as a dsDNA endonuclease. Involved in the integration of spacer DNA into the CRISPR cassette. This Fusobacterium nucleatum subsp. nucleatum (strain ATCC 25586 / DSM 15643 / BCRC 10681 / CIP 101130 / JCM 8532 / KCTC 2640 / LMG 13131 / VPI 4355) protein is CRISPR-associated endonuclease Cas1.